Here is a 109-residue protein sequence, read N- to C-terminus: uncharacterized protein (109 aa).

An HTH hxlR-type domain is found at 10–109; the sequence is APFEYTLSLI…WGMAQGGPHM (100 aa).

This is an uncharacterized protein from Bacillus subtilis (strain 168).